The sequence spans 609 residues: Proteasome-associated ATPase (609 aa).

The segment at 1–25 is disordered; it reads MADSERSEAFGTPDDTPLSSNDAAE. The stretch at 19-96 forms a coiled coil; the sequence is SSNDAAELEQ…LREEVDRLGQ (78 aa). 296–301 contributes to the ATP binding site; the sequence is GCGKTL. Residues 608–609 form a docks into pockets in the proteasome alpha-ring region; that stretch reads YL.

Belongs to the AAA ATPase family. As to quaternary structure, homohexamer. Assembles into a hexameric ring structure that caps the 20S proteasome core. Strongly interacts with the prokaryotic ubiquitin-like protein Pup through a hydrophobic interface; the interacting region of ARC lies in its N-terminal coiled-coil domain. There is one Pup binding site per ARC hexamer ring. Upon ATP-binding, the C-terminus of ARC interacts with the alpha-rings of the proteasome core, possibly by binding to the intersubunit pockets.

The protein operates within protein degradation; proteasomal Pup-dependent pathway. In terms of biological role, ATPase which is responsible for recognizing, binding, unfolding and translocation of pupylated proteins into the bacterial 20S proteasome core particle. May be essential for opening the gate of the 20S proteasome via an interaction with its C-terminus, thereby allowing substrate entry and access to the site of proteolysis. Thus, the C-termini of the proteasomal ATPase may function like a 'key in a lock' to induce gate opening and therefore regulate proteolysis. In Mycobacterium marinum (strain ATCC BAA-535 / M), this protein is Proteasome-associated ATPase.